Here is a 434-residue protein sequence, read N- to C-terminus: Histidinol dehydrogenase (434 aa).

Positions 130, 191, and 214 each coordinate NAD(+). Ser-237, Gln-259, and His-262 together coordinate substrate. Positions 259 and 262 each coordinate Zn(2+). Catalysis depends on proton acceptor residues Glu-327 and His-328. Substrate contacts are provided by His-328, Asp-361, Glu-415, and His-420. Residue Asp-361 coordinates Zn(2+). A Zn(2+)-binding site is contributed by His-420.

The protein belongs to the histidinol dehydrogenase family. Zn(2+) is required as a cofactor.

The catalysed reaction is L-histidinol + 2 NAD(+) + H2O = L-histidine + 2 NADH + 3 H(+). Its pathway is amino-acid biosynthesis; L-histidine biosynthesis; L-histidine from 5-phospho-alpha-D-ribose 1-diphosphate: step 9/9. Functionally, catalyzes the sequential NAD-dependent oxidations of L-histidinol to L-histidinaldehyde and then to L-histidine. This Cereibacter sphaeroides (strain ATCC 17023 / DSM 158 / JCM 6121 / CCUG 31486 / LMG 2827 / NBRC 12203 / NCIMB 8253 / ATH 2.4.1.) (Rhodobacter sphaeroides) protein is Histidinol dehydrogenase.